A 291-amino-acid chain; its full sequence is Elongation factor Ts (291 aa).

The segment at 79 to 82 is involved in Mg(2+) ion dislocation from EF-Tu; that stretch reads TDFV.

The protein belongs to the EF-Ts family.

It is found in the cytoplasm. Associates with the EF-Tu.GDP complex and induces the exchange of GDP to GTP. It remains bound to the aminoacyl-tRNA.EF-Tu.GTP complex up to the GTP hydrolysis stage on the ribosome. In Roseobacter denitrificans (strain ATCC 33942 / OCh 114) (Erythrobacter sp. (strain OCh 114)), this protein is Elongation factor Ts.